A 239-amino-acid polypeptide reads, in one-letter code: 4-hydroxy-tetrahydrodipicolinate reductase (239 aa).

NAD(+)-binding positions include 12–17 (GASGRM), 94–96 (GTT), and 118–121 (ASNF). His150 serves as the catalytic Proton donor/acceptor. His151 serves as a coordination point for (S)-2,3,4,5-tetrahydrodipicolinate. Lys154 (proton donor) is an active-site residue. Residue 160 to 161 (GT) coordinates (S)-2,3,4,5-tetrahydrodipicolinate.

It belongs to the DapB family.

It localises to the cytoplasm. The enzyme catalyses (S)-2,3,4,5-tetrahydrodipicolinate + NAD(+) + H2O = (2S,4S)-4-hydroxy-2,3,4,5-tetrahydrodipicolinate + NADH + H(+). It catalyses the reaction (S)-2,3,4,5-tetrahydrodipicolinate + NADP(+) + H2O = (2S,4S)-4-hydroxy-2,3,4,5-tetrahydrodipicolinate + NADPH + H(+). It functions in the pathway amino-acid biosynthesis; L-lysine biosynthesis via DAP pathway; (S)-tetrahydrodipicolinate from L-aspartate: step 4/4. Its function is as follows. Catalyzes the conversion of 4-hydroxy-tetrahydrodipicolinate (HTPA) to tetrahydrodipicolinate. The protein is 4-hydroxy-tetrahydrodipicolinate reductase of Stenotrophomonas maltophilia (strain K279a).